The chain runs to 355 residues: GTPase Obg (355 aa).

The Obg domain maps to 1–159; the sequence is MKLVDEAEIL…RLLKLELKLL (159 aa). An OBG-type G domain is found at 160 to 342; it reads ADVGLLGFPN…IMKDVMAFFD (183 aa). Residues 166-173, 191-195, 213-216, 292-295, and 323-325 contribute to the GTP site; these read GFPNAGKS, FTTLY, DVPG, NKAD, and SAL. Mg(2+) is bound by residues serine 173 and threonine 193.

This sequence belongs to the TRAFAC class OBG-HflX-like GTPase superfamily. OBG GTPase family. Monomer. Requires Mg(2+) as cofactor.

The protein resides in the cytoplasm. An essential GTPase which binds GTP, GDP and possibly (p)ppGpp with moderate affinity, with high nucleotide exchange rates and a fairly low GTP hydrolysis rate. Plays a role in control of the cell cycle, stress response, ribosome biogenesis and in those bacteria that undergo differentiation, in morphogenesis control. This is GTPase Obg from Xanthomonas axonopodis pv. citri (strain 306).